The chain runs to 515 residues: AAA ATPase forming ring-shaped complexes (515 aa).

Residues 2–49 (NDHDEETLASLQQANDQLMAKNHALVKALSRATQEMTKTKAQLNQLAG) adopt a coiled-coil conformation. 240-245 (GNGKTL) provides a ligand contact to ATP.

This sequence belongs to the AAA ATPase family. As to quaternary structure, homohexamer. Assembles into a hexameric ring structure.

The protein is AAA ATPase forming ring-shaped complexes of Bifidobacterium adolescentis (strain ATCC 15703 / DSM 20083 / NCTC 11814 / E194a).